A 417-amino-acid polypeptide reads, in one-letter code: NADH-quinone oxidoreductase subunit D (417 aa).

Belongs to the complex I 49 kDa subunit family. NDH-1 is composed of 14 different subunits. Subunits NuoB, C, D, E, F, and G constitute the peripheral sector of the complex.

The protein localises to the cell inner membrane. It carries out the reaction a quinone + NADH + 5 H(+)(in) = a quinol + NAD(+) + 4 H(+)(out). Functionally, NDH-1 shuttles electrons from NADH, via FMN and iron-sulfur (Fe-S) centers, to quinones in the respiratory chain. The immediate electron acceptor for the enzyme in this species is believed to be ubiquinone. Couples the redox reaction to proton translocation (for every two electrons transferred, four hydrogen ions are translocated across the cytoplasmic membrane), and thus conserves the redox energy in a proton gradient. This Burkholderia thailandensis (strain ATCC 700388 / DSM 13276 / CCUG 48851 / CIP 106301 / E264) protein is NADH-quinone oxidoreductase subunit D.